The primary structure comprises 1360 residues: MNKSAIRYLSLLLVFLMGGSFLAGITTFGQTSSTAGGVTISVSNEWVGNDTVVLVAIYNPNVPQSAQGAKYVAGNVTISAGGVTVPLISNDTSNASVVYYLNNGQHYFWFFITMTPVPTTSASSLSMTETLTINSTSTNVQLTNPYLSFTTPVGNVQTDGKAGVFQLTLPSSFPNQLIGEYGQTVYGGHKVNITDLYFFSGDKTITISYSTGASVTINNYLADSSNYAATLQTTESTVPLNSTWQVYFVDNIMQANPLVGGNGGFMITANGTQVSPVIQNVSYLAVKNGVYVNTTVFANNPVPNAQAMFGYGNVYYGNFTMYTSSIVTNKTYATLLSGNNYTPANVSFSQYKMLITSGLFTTNTPITIYLSDWIGNNASVSIKGTIKETTLQSITLSVQKGENLTVNDFNNISNYSVRRNIMVYVALQNITGSTYKTAMVSLPETYAGSGVFSLPTVLRIGSSPSITYSTSQVTITLPPYDFSNTSLLITATNDIGASYYYLGSNTVKNISTPGTISVGTPTLVPIPNVVSVANVTPVIELAYTEPNLAFGTATTLTVSGTSVKYNGVQVATDSVTAVLPNGTVISGNLNGLSITSLTSANGNGTFFIVVPSTVIKTFLGTHTYIPSGTELTFKIYDEFAAQTLSVTYKFTTVAPVIAIKTPTSTSFSSAETAYLPPLPYNVVPEKHYISVNVTDTLYAQSVPSSALQTTLKIIVENPAGQKVGNVVTTVVSETAANSGLFTGKIYYTVYENSSGYWLNINGQNITNLKNVVNGGLIVFEYTSPSSQSTVNATALLEPSPFTLSVSQTSANPGQHVNVSVNSPGLVESSNMKFTGSLIIYAQFAEWNGPGSQPTIAVSPITLKEVSAGSPVFGGTIVLGNSSVVSSGNLTSLITTPGYTVAPGSVVLVNANATIGPTSTSSSITPYYQQQSISINVVDINVSILNPSPASPFAKLEIELQSPLFNLLTHPAAGNYTSAGTSAGILEGILSTITTQQSQQLVTSTQLVTSPKTSFYYNNTIWVIETPMTLWSGTPGSYGIPIEVNLTDLLTVTHNVYAIHVVEVPNVTTGTVSLVSAYAVPSVSSNVAQLQINGLVPPVISVFFNGNNITQSASAAIPFPNTTAGELVNVTVYAPDAVNNLNVPGSGTTFNVTIVNTANGETTTLTLTQMTKIIGGVAVPTPYYTGLLKVVEPTVYTPGTPGVISASSGVVNKVLVNMNLVEGQYYNTQGLLQQLRMKASSYFYVGVIKLSVLVSHFTILSNGTPVTGMQVGKSYSLLFNVTNNGNVNETIYGTLEVLLNGTPVQPEIVAQITLAPGQSTQIGTLFTPTMPGSYTITFIPFQNNLLSIPYNQGLTEVVTAS.

A signal peptide spans 1–24 (MNKSAIRYLSLLLVFLMGGSFLAG).

Belongs to the Sulfolobales SlaA family. As to quaternary structure, the mushroom-shaped unit cells of the Sulfolobales' S-layers may consist of three SlaB subunits and six SlaA subunits.

Its subcellular location is the secreted. It is found in the cell wall. The protein localises to the S-layer. Its function is as follows. S-layer large protein. May form the highly ordered outer sheath. The protein is S-layer protein A of Metallosphaera sedula (strain ATCC 51363 / DSM 5348 / JCM 9185 / NBRC 15509 / TH2).